Reading from the N-terminus, the 609-residue chain is DNA-directed RNA polymerase subunit beta' (609 aa).

Residues cysteine 67, cysteine 69, cysteine 82, and cysteine 85 each contribute to the Zn(2+) site. Residues aspartate 460, aspartate 462, and aspartate 464 each coordinate Mg(2+).

This sequence belongs to the RNA polymerase beta' chain family. RpoC1 subfamily. In terms of assembly, in plastids the minimal PEP RNA polymerase catalytic core is composed of four subunits: alpha, beta, beta', and beta''. When a (nuclear-encoded) sigma factor is associated with the core the holoenzyme is formed, which can initiate transcription. The cofactor is Mg(2+). It depends on Zn(2+) as a cofactor.

It is found in the plastid. The protein localises to the chloroplast. The catalysed reaction is RNA(n) + a ribonucleoside 5'-triphosphate = RNA(n+1) + diphosphate. Its function is as follows. DNA-dependent RNA polymerase catalyzes the transcription of DNA into RNA using the four ribonucleoside triphosphates as substrates. The chain is DNA-directed RNA polymerase subunit beta' from Emiliania huxleyi (Coccolithophore).